We begin with the raw amino-acid sequence, 387 residues long: Phosphoglycerate kinase (387 aa).

Substrate is bound by residues 21 to 23, arginine 36, 59 to 62, arginine 113, and arginine 146; these read DLN and HLGR. Residues lysine 197, glutamate 314, and 340-343 each bind ATP; that span reads GGDT.

This sequence belongs to the phosphoglycerate kinase family. In terms of assembly, monomer.

It is found in the cytoplasm. The catalysed reaction is (2R)-3-phosphoglycerate + ATP = (2R)-3-phospho-glyceroyl phosphate + ADP. It participates in carbohydrate degradation; glycolysis; pyruvate from D-glyceraldehyde 3-phosphate: step 2/5. The protein is Phosphoglycerate kinase of Pseudomonas fluorescens (strain ATCC BAA-477 / NRRL B-23932 / Pf-5).